Reading from the N-terminus, the 208-residue chain is Glutathione S-transferase 1-1 (208 aa).

In terms of domain architecture, GST N-terminal spans 1 to 80 (MDFYYLPGSA…YLVEKYGKND (80 aa)). Residues Ser9, 50-52 (HTI), and 64-66 (ESR) contribute to the glutathione site. In terms of domain architecture, GST C-terminal spans 86–207 (CPKKRAVINQ…EGCLEFKKFF (122 aa)).

Belongs to the GST superfamily. Theta family. In terms of assembly, homodimer.

It carries out the reaction RX + glutathione = an S-substituted glutathione + a halide anion + H(+). In terms of biological role, conjugation of reduced glutathione to a wide number of exogenous and endogenous hydrophobic electrophiles. The polypeptide is Glutathione S-transferase 1-1 (GST1) (Lucilia cuprina (Green bottle fly)).